The primary structure comprises 82 residues: Ubiquinol-cytochrome-c reductase complex assembly factor 3 (82 aa).

Over 1–6 the chain is Mitochondrial matrix; sequence METVRR. Residues 7-29 form a helical membrane-spanning segment; the sequence is IVKGTLLLGFCTGIGGDLWVLVA. The Mitochondrial intermembrane segment spans residues 30 to 82; that stretch reads PGQERRLEMRMNYPEANPPMLAEAHKRNEMVLKVIEESAKTNENMARRSPWSS.

It belongs to the UQCC3 family. In terms of assembly, associates with the ubiquinol-cytochrome c reductase complex (mitochondrial respiratory chain complex III or cytochrome b-c1 complex).

It localises to the mitochondrion inner membrane. Functionally, required for the assembly of the ubiquinol-cytochrome c reductase complex (mitochondrial respiratory chain complex III or cytochrome b-c1 complex), mediating cytochrome b recruitment and probably stabilization within the complex. Thereby, plays an important role in ATP production by mitochondria. Cardiolipin-binding protein, it may also control the cardiolipin composition of mitochondria membranes and their morphology. This chain is Ubiquinol-cytochrome-c reductase complex assembly factor 3, found in Xenopus laevis (African clawed frog).